Reading from the N-terminus, the 568-residue chain is Sphingosine-1-phosphate lyase 1 (568 aa).

The Lumenal portion of the chain corresponds to 1-41 (MPSTDLLKLKDFEPYLEILEAYSTKAKNYVNGYCTKYEPWQ). The chain crosses the membrane as a helical; Signal-anchor for type III membrane protein span at residues 42 to 62 (LIAGSVLCTLLVVWVYELIFQ). The Cytoplasmic segment spans residues 63-568 (PESLWSRFKN…NQMNGSPKPR (506 aa)). An N6-(pyridoxal phosphate)lysine; alternate modification is found at Lys353. Lys353 bears the N6-acetyllysine; alternate mark. Residues Tyr356 and Tyr366 each carry the 3'-nitrotyrosine modification. Position 564 is a phosphoserine (Ser564).

This sequence belongs to the group II decarboxylase family. Sphingosine-1-phosphate lyase subfamily. In terms of assembly, homodimer. Requires pyridoxal 5'-phosphate as cofactor.

It localises to the endoplasmic reticulum membrane. It carries out the reaction sphinganine 1-phosphate = hexadecanal + phosphoethanolamine. The enzyme catalyses sphing-4-enine 1-phosphate = (2E)-hexadecenal + phosphoethanolamine. The protein operates within lipid metabolism; sphingolipid metabolism. Functionally, cleaves phosphorylated sphingoid bases (PSBs), such as sphingosine-1-phosphate, into fatty aldehydes and phosphoethanolamine. Elevates stress-induced ceramide production and apoptosis. Required for global lipid homeostasis in liver and cholesterol homeostasis in fibroblasts. Involved in the regulation of pro-inflammatory response and neutrophil trafficking. Modulates neuronal autophagy via phosphoethanolamine production which regulates accumulation of aggregate-prone proteins such as APP. Seems to play a role in establishing neuronal contact sites and axonal maintenance. The sequence is that of Sphingosine-1-phosphate lyase 1 from Rattus norvegicus (Rat).